Here is a 3072-residue protein sequence, read N- to C-terminus: E1A-binding protein p400 (3072 aa).

Residues 1-22 (MHHGSGPQNVQHQLQRSRSFTG) are compositionally biased toward polar residues. Disordered stretches follow at residues 1–55 (MHHG…SPGY), 125–149 (PMSQ…LQNV), and 222–250 (LSQP…TGLQ). Residues 31-40 (PNLPPSPAAP) show a composition bias toward pro residues. 2 stretches are compositionally biased toward low complexity: residues 41–53 (FAPS…PQSP) and 125–136 (PMSQQVQTQSPT). Phosphoserine occurs at positions 52 and 134. S315 and S321 each carry phosphoserine. Disordered regions lie at residues 485 to 519 (SLTG…KRPR), 544 to 601 (MPTV…ASVP), and 635 to 769 (APIP…SQDK). Low complexity predominate over residues 556–569 (QATQLTGQKQSQQQ). Polar residues predominate over residues 570-583 (YDPSTGPPVQNAAS). The segment covering 586–599 (TPPPQLPARLPPAS) has biased composition (pro residues). Composition is skewed to low complexity over residues 646–657 (PAPSSQPAQPAL), 668–682 (QTSQ…VAST), and 695–710 (SLPT…PVSG). Polar residues-rich tracts occupy residues 724 to 741 (NRPS…TSRS) and 754 to 765 (SPAQNAASSQDG). 3 positions are modified to phosphoserine: S735, S741, and S754. An HSA domain is found at 798-870 (LPKLQEAPRP…EQSRLRRIAA (73 aa)). Over residues 914–928 (ESRLKGFDTSPEHSL) the composition is skewed to basic and acidic residues. Disordered stretches follow at residues 914-952 (ESRL…EDEE) and 997-1024 (FQWP…DRES). T922 carries the post-translational modification Phosphothreonine. S923, S927, and S940 each carry phosphoserine. At T944 the chain carries Phosphothreonine. The tract at residues 950 to 1364 (DEEETIEEEE…SVLSVLTRLQ (415 aa)) is interactions with RUVBL1 and RUVBL2. Phosphoserine is present on residues S1009 and S1010. The region spanning 1102–1267 (AKLYRKNLNG…WTMVHFLIPG (166 aa)) is the Helicase ATP-binding domain. Position 1115 to 1122 (1115 to 1122 (DEAGLGKT)) interacts with ATP. The DEAD box-like signature appears at 1218–1221 (DEMQ). The residue at position 1471 (K1471) is an N6-acetyllysine. The interval 1473–1503 (EGRTVAFPSTHPPRMANTNTSTATPQGQVRG) is disordered. A compositionally biased stretch (polar residues) spans 1488 to 1499 (ANTNTSTATPQG). Residues S1646 and S1650 each carry the phosphoserine modification. The Helicase C-terminal domain occupies 1815-1972 (KLEALAILLQ…GNDYSMAFLT (158 aa)). Disordered stretches follow at residues 2033–2062 (AQRS…DEEP) and 2203–2227 (KERK…GEAV). A compositionally biased stretch (low complexity) spans 2043 to 2053 (GSSSVAVSSDS). N6-acetyllysine is present on residues K2265 and K2272. Residues 2276 to 2345 (EPAQDSPDWL…QCRNRYENVI (70 aa)) enclose the Myb-like domain. The segment at 2440–2699 (KEKKALADQQ…QQQQQQQQQT (260 aa)) is interaction with ZNF42. Residues 2441–2534 (EKKALADQQK…PQSKGQPTMT (94 aa)) form a disordered region. 2 stretches are compositionally biased toward low complexity: residues 2446–2455 (ADQQKAQQPP) and 2463–2478 (QQQQ…QQQQ). The segment covering 2479–2493 (QPPPPPQQPPPPVPQ) has biased composition (pro residues). Over residues 2494–2526 (PQAASSQTPAGQPAVQPQPQPQVQTQPQPVQPQ) the composition is skewed to low complexity. Position 2614 is a phosphoserine (S2614). Disordered regions lie at residues 2734–2790 (QKMQ…TGTT) and 3028–3072 (ASLQ…PPCQ). Residues 2739 to 2754 (PPQPPPPQAQPGPPQQ) are compositionally biased toward pro residues. Low complexity predominate over residues 2755 to 2775 (PAQVQVQTPQPPQQQQSPQLT). Residues 3042–3053 (PASSDSPSQQPK) are compositionally biased toward polar residues.

This sequence belongs to the SNF2/RAD54 helicase family. SWR1 subfamily. As to quaternary structure, component of the NuA4 histone acetyltransferase complex which contains the catalytic subunit KAT5/TIP60 and the subunits EP400, TRRAP/PAF400, BRD8/SMAP, EPC1, DMAP1/DNMAP1, RUVBL1/TIP49, RUVBL2, ING3, actin, ACTL6A/BAF53A, MORF4L1/MRG15, MORF4L2/MRGX, MRGBP, YEATS4/GAS41, VPS72/YL1 and MEAF6. May also participate in the formation of NuA4 related complexes which lack the KAT5/TIP60 catalytic subunit, but which include the SWI/SNF related protein SRCAP. The NuA4 complex interacts with MYC. EP400 interacts with TRRAP, RUVBL1 and RUVBL2. Component of a SWR1-like complex. Interacts with ZNF42. Interacts with PHF5A. Expressed in brain, thymus, lung, liver, spleen, kidney, colon and bone marrow.

It localises to the nucleus. Functionally, component of the NuA4 histone acetyltransferase complex which is involved in transcriptional activation of select genes principally by acetylation of nucleosomal histones H4 and H2A. This modification may both alter nucleosome - DNA interactions and promote interaction of the modified histones with other proteins which positively regulate transcription. May be required for transcriptional activation of E2F1 and MYC target genes during cellular proliferation. The NuA4 complex ATPase and helicase activities seem to be, at least in part, contributed by the association of RUVBL1 and RUVBL2 with EP400. Component of a SWR1-like complex that specifically mediates the removal of histone H2A.Z/H2AZ1 from the nucleosome. Regulates transcriptional activity of ZNF42. The sequence is that of E1A-binding protein p400 (Ep400) from Mus musculus (Mouse).